The primary structure comprises 373 residues: Dual-specificity RNA methyltransferase RlmN (373 aa).

Catalysis depends on E94, which acts as the Proton acceptor. Residues E100–D339 form the Radical SAM core domain. An intrachain disulfide couples C107 to C344. Positions 114, 118, and 121 each coordinate [4Fe-4S] cluster. Residues G168 to E169, S200, S222 to H224, and N301 contribute to the S-adenosyl-L-methionine site. Residue C344 is the S-methylcysteine intermediate of the active site.

This sequence belongs to the radical SAM superfamily. RlmN family. The cofactor is [4Fe-4S] cluster.

Its subcellular location is the cytoplasm. It carries out the reaction adenosine(2503) in 23S rRNA + 2 reduced [2Fe-2S]-[ferredoxin] + 2 S-adenosyl-L-methionine = 2-methyladenosine(2503) in 23S rRNA + 5'-deoxyadenosine + L-methionine + 2 oxidized [2Fe-2S]-[ferredoxin] + S-adenosyl-L-homocysteine. The enzyme catalyses adenosine(37) in tRNA + 2 reduced [2Fe-2S]-[ferredoxin] + 2 S-adenosyl-L-methionine = 2-methyladenosine(37) in tRNA + 5'-deoxyadenosine + L-methionine + 2 oxidized [2Fe-2S]-[ferredoxin] + S-adenosyl-L-homocysteine. Its function is as follows. Specifically methylates position 2 of adenine 2503 in 23S rRNA and position 2 of adenine 37 in tRNAs. m2A2503 modification seems to play a crucial role in the proofreading step occurring at the peptidyl transferase center and thus would serve to optimize ribosomal fidelity. This is Dual-specificity RNA methyltransferase RlmN from Shewanella sp. (strain MR-7).